The following is a 747-amino-acid chain: Endoglucanase D (747 aa).

Positions 1 to 39 (MHSASRTRARTRVRTAVSGLLAATVLAAPLTLVAAPAQA) are cleaved as a signal peptide. Catalysis depends on Glu-208, which acts as the Proton donor. Glu-349 functions as the Nucleophile in the catalytic mechanism. Positions 456–475 (APTGLRAGTPTASTVPLTWS) are disordered. 2 Fibronectin type-III domains span residues 456-543 (APTG…TAAG) and 552-639 (VPTG…TAPD). Residues 465 to 475 (PTASTVPLTWS) show a composition bias toward polar residues. Positions 638-747 (PDPTTGSCAV…TVGGATCTTR (110 aa)) constitute a CBM2 domain.

It belongs to the glycosyl hydrolase 5 (cellulase A) family.

It carries out the reaction Endohydrolysis of (1-&gt;4)-beta-D-glucosidic linkages in cellulose, lichenin and cereal beta-D-glucans.. The protein operates within glycan metabolism; cellulose degradation. The chain is Endoglucanase D (cenD) from Cellulomonas fimi.